We begin with the raw amino-acid sequence, 586 residues long: Phosphomethylpyrimidine synthase (586 aa).

Residues 1–59 (MKQSVSAEQIELKSSLPGSKKVYVDGPREGMKVPMREIEQSETNGVPNPPIRVYDTSGP) are disordered. Positions 22–39 (VYVDGPREGMKVPMREIE) are enriched in basic and acidic residues. Residues Asn-193, Met-222, Tyr-251, His-287, 307–309 (SRG), 348–351 (DGLR), and Glu-387 each bind substrate. His-391 lines the Zn(2+) pocket. Residue Tyr-414 coordinates substrate. His-455 is a binding site for Zn(2+). Cys-535, Cys-538, and Cys-543 together coordinate [4Fe-4S] cluster.

This sequence belongs to the ThiC family. [4Fe-4S] cluster serves as cofactor.

It carries out the reaction 5-amino-1-(5-phospho-beta-D-ribosyl)imidazole + S-adenosyl-L-methionine = 4-amino-2-methyl-5-(phosphooxymethyl)pyrimidine + CO + 5'-deoxyadenosine + formate + L-methionine + 3 H(+). Its pathway is cofactor biosynthesis; thiamine diphosphate biosynthesis. Catalyzes the synthesis of the hydroxymethylpyrimidine phosphate (HMP-P) moiety of thiamine from aminoimidazole ribotide (AIR) in a radical S-adenosyl-L-methionine (SAM)-dependent reaction. The sequence is that of Phosphomethylpyrimidine synthase from Bacillus cereus (strain ATCC 14579 / DSM 31 / CCUG 7414 / JCM 2152 / NBRC 15305 / NCIMB 9373 / NCTC 2599 / NRRL B-3711).